The chain runs to 130 residues: uncharacterized protein (130 aa).

This is an uncharacterized protein from Citrus leprosis virus C (isolate Citrus sinesis/Brazil/Cordeiropolis/2003) (CiLV-C).